The following is a 32-amino-acid chain: Protein YthB (32 aa).

The polypeptide is Protein YthB (Escherichia coli (strain K12)).